The sequence spans 833 residues: Coiled-coil domain-containing protein 110 (833 aa).

A coiled-coil region spans residues 431–778 (LQNYLKESVQ…REYLNLSDKI (348 aa)).

The protein resides in the nucleus. This Macaca fascicularis (Crab-eating macaque) protein is Coiled-coil domain-containing protein 110 (CCDC110).